The following is a 716-amino-acid chain: ATP-dependent DNA helicase DinG (716 aa).

Residues 17-294 (ALQEQIPDFI…TCMEQFRPKT (278 aa)) enclose the Helicase ATP-binding domain. 54–61 (APTGVGKT) contacts ATP. Cysteine 120 serves as a coordination point for [4Fe-4S] cluster. Residues 131–134 (EPTQ) carry the DEAH box motif. 3 residues coordinate [4Fe-4S] cluster: cysteine 194, cysteine 199, and cysteine 205. The short motif at 248-251 (DEGH) is the DEAH box element. Residues 517 to 698 (HIAEMAAFFR…VFPIEQPEVP (182 aa)) form the Helicase C-terminal domain.

It belongs to the helicase family. DinG subfamily. Type 1 sub-subfamily. Requires [4Fe-4S] cluster as cofactor.

The enzyme catalyses Couples ATP hydrolysis with the unwinding of duplex DNA at the replication fork by translocating in the 5'-3' direction. This creates two antiparallel DNA single strands (ssDNA). The leading ssDNA polymer is the template for DNA polymerase III holoenzyme which synthesizes a continuous strand.. It catalyses the reaction ATP + H2O = ADP + phosphate + H(+). Its function is as follows. DNA-dependent ATPase and 5'-3' DNA helicase. Unwinds D-loops, R-loops, forked DNA and G-quadruplex DNA. The protein is ATP-dependent DNA helicase DinG of Escherichia coli O6:H1 (strain CFT073 / ATCC 700928 / UPEC).